Here is a 219-residue protein sequence, read N- to C-terminus: Cytochrome c oxidase assembly protein CtaG (219 aa).

Over residues 1–13 (MDATDQGKSTSTT) the composition is skewed to polar residues. Residues 1–24 (MDATDQGKSTSTTAAQAAPGKAAP) form a disordered region. Topologically, residues 1-29 (MDATDQGKSTSTTAAQAAPGKAAPRRGIG) are cytoplasmic. Over residues 14–24 (AAQAAPGKAAP) the composition is skewed to low complexity. The chain crosses the membrane as a helical; Signal-anchor for type II membrane protein span at residues 30 to 52 (RDALVGGICGAVVVLMIGASYAA). The Periplasmic segment spans residues 53–219 (VPFYNWFCRA…GEPDKPRGSL (167 aa)).

The protein belongs to the COX11/CtaG family.

Its subcellular location is the cell inner membrane. Exerts its effect at some terminal stage of cytochrome c oxidase synthesis, probably by being involved in the insertion of the copper B into subunit I. In Bradyrhizobium sp. (strain ORS 278), this protein is Cytochrome c oxidase assembly protein CtaG.